A 73-amino-acid chain; its full sequence is Large ribosomal subunit protein uL29 (73 aa).

It belongs to the universal ribosomal protein uL29 family.

In Saccharolobus solfataricus (strain ATCC 35092 / DSM 1617 / JCM 11322 / P2) (Sulfolobus solfataricus), this protein is Large ribosomal subunit protein uL29 (rpl29).